The following is a 491-amino-acid chain: Probable CtpA-like serine protease (491 aa).

The segment at M1–S22 is disordered. Residues E9–S22 show a composition bias toward polar residues. Residues F34 to I54 traverse the membrane as a helical segment. A PDZ domain is found at T119 to G201. Catalysis depends on charge relay system residues S324, D335, and K349.

It belongs to the peptidase S41A family.

It localises to the cell membrane. In Staphylococcus saprophyticus subsp. saprophyticus (strain ATCC 15305 / DSM 20229 / NCIMB 8711 / NCTC 7292 / S-41), this protein is Probable CtpA-like serine protease.